Reading from the N-terminus, the 489-residue chain is UDP-N-acetylmuramoyl-L-alanyl-D-glutamate--2,6-diaminopimelate ligase (489 aa).

Residue S30 participates in UDP-N-acetyl-alpha-D-muramoyl-L-alanyl-D-glutamate binding. 110–116 (GTNGKTT) contacts ATP. UDP-N-acetyl-alpha-D-muramoyl-L-alanyl-D-glutamate contacts are provided by residues 152-153 (TT), S179, and R187. An N6-carboxylysine modification is found at K219. Meso-2,6-diaminopimelate contacts are provided by residues R381, 405–408 (DNPR), G458, and E462. Residues 405–408 (DNPR) carry the Meso-diaminopimelate recognition motif motif.

The protein belongs to the MurCDEF family. MurE subfamily. Mg(2+) is required as a cofactor. Post-translationally, carboxylation is probably crucial for Mg(2+) binding and, consequently, for the gamma-phosphate positioning of ATP.

Its subcellular location is the cytoplasm. The enzyme catalyses UDP-N-acetyl-alpha-D-muramoyl-L-alanyl-D-glutamate + meso-2,6-diaminopimelate + ATP = UDP-N-acetyl-alpha-D-muramoyl-L-alanyl-gamma-D-glutamyl-meso-2,6-diaminopimelate + ADP + phosphate + H(+). Its pathway is cell wall biogenesis; peptidoglycan biosynthesis. Catalyzes the addition of meso-diaminopimelic acid to the nucleotide precursor UDP-N-acetylmuramoyl-L-alanyl-D-glutamate (UMAG) in the biosynthesis of bacterial cell-wall peptidoglycan. The protein is UDP-N-acetylmuramoyl-L-alanyl-D-glutamate--2,6-diaminopimelate ligase of Syntrophomonas wolfei subsp. wolfei (strain DSM 2245B / Goettingen).